We begin with the raw amino-acid sequence, 358 residues long: Aminomethyltransferase (358 aa).

This sequence belongs to the GcvT family. As to quaternary structure, the glycine cleavage system is composed of four proteins: P, T, L and H.

The enzyme catalyses N(6)-[(R)-S(8)-aminomethyldihydrolipoyl]-L-lysyl-[protein] + (6S)-5,6,7,8-tetrahydrofolate = N(6)-[(R)-dihydrolipoyl]-L-lysyl-[protein] + (6R)-5,10-methylene-5,6,7,8-tetrahydrofolate + NH4(+). The glycine cleavage system catalyzes the degradation of glycine. The sequence is that of Aminomethyltransferase from Francisella tularensis subsp. tularensis (strain FSC 198).